Here is a 483-residue protein sequence, read N- to C-terminus: MATRGGGPGPGFRHRALRGLLLLCLWLPGSRPGEPAAPSSGVDRLLQDFRRQLQRARPREELEPELLGGPREDCPGAGGTAVYRAVPDTIIRTQDSIAAGASFLRAPGSVRGWRQCVTACCSEPSCSVAVVQLPRGPSVPAPMPAPRCYLFNCTARGRSVCKFAPLRGYRTYTLSRAEDAAGIPPRPDEDKPPVSKAGKDVVLHLPTDGVVLDGRESSDDHAIVLYEWTLQQGDPSSVDMKVPQPGTLRLSRLKEGAYIFQLTVTDSVGQRSSDNVSVTVLPRPYSTGGCSSACSRYHFFCDSGCCIDIALACDGVRQCPDGSDEDFCQNLALDRKLVTHTVATSAQPGAMGLNEGEGDPKLEKSQRATTHNQPATVSHPETRIHSTQKAPESQINPVQPDSNSSGKNQEEGNYDLKSKSGQAGGEHPAPEAGAVLPLALGLAITVLLLLMVTCRLRLVKQKLKKARPITSEESDYLINGMYL.

The signal sequence occupies residues 1–32; it reads MATRGGGPGPGFRHRALRGLLLLCLWLPGSRP. Residues 33 to 433 are Extracellular-facing; it reads GEPAAPSSGV…GGEHPAPEAG (401 aa). The region spanning 85-172 is the MANSC domain; that stretch reads AVPDTIIRTQ…FAPLRGYRTY (88 aa). Residues asparagine 152 and asparagine 275 are each glycosylated (N-linked (GlcNAc...) asparagine). A PKD domain is found at 193–287; sequence PVSKAGKDVV…VTVLPRPYST (95 aa). An LDL-receptor class A domain is found at 293 to 329; the sequence is ACSRYHFFCDSGCCIDIALACDGVRQCPDGSDEDFCQ. Intrachain disulfides connect cysteine 294/cysteine 306, cysteine 301/cysteine 319, and cysteine 313/cysteine 328. The segment at 346–428 is disordered; it reads AQPGAMGLNE…KSGQAGGEHP (83 aa). Composition is skewed to polar residues over residues 367–376 and 385–407; these read RATTHNQPAT and HSTQ…SSGK. Asparagine 403 is a glycosylation site (N-linked (GlcNAc...) asparagine). The segment covering 408–418 has biased composition (basic and acidic residues); that stretch reads NQEEGNYDLKS. The chain crosses the membrane as a helical span at residues 434-456; the sequence is AVLPLALGLAITVLLLLMVTCRL. The Cytoplasmic segment spans residues 457-483; that stretch reads RLVKQKLKKARPITSEESDYLINGMYL. Serine 474 carries the post-translational modification Phosphoserine.

Belongs to the LDLR family.

It localises to the membrane. The sequence is that of Low-density lipoprotein receptor-related protein 11 (Lrp11) from Mus musculus (Mouse).